We begin with the raw amino-acid sequence, 110 residues long: Parvalbumin alpha (110 aa).

Residue Ser-2 is modified to N-acetylserine. Phosphoserine is present on residues Ser-2, Ser-8, and Ser-24. 2 EF-hand domains span residues 39 to 74 (KSADDVKKVFHILDKDKSGFIEEDELGSILKGFSSD) and 78 to 110 (LSAKETKTLMAAGDKDGDGKIGVEEFSTLVAES). Ca(2+) contacts are provided by Asp-52, Asp-54, Ser-56, Phe-58, Glu-60, and Glu-63. At Ser-66 the chain carries Phosphoserine. Asp-91, Asp-93, Asp-95, Lys-97, and Glu-102 together coordinate Ca(2+).

Its function is as follows. In muscle, parvalbumin is thought to be involved in relaxation after contraction. It binds two calcium ions. The protein is Parvalbumin alpha (Pvalb) of Rattus norvegicus (Rat).